An 87-amino-acid chain; its full sequence is MAKEELLELDGIVDEVLPDSKYRVTLENGVVVGAYASGRMRKNHIRILAGDRVTLELSMYDLTKGRINFRHKDANSTRPPRSGQPRR.

Residues 1-72 (MAKEELLELD…TKGRINFRHK (72 aa)) form the S1-like domain.

This sequence belongs to the IF-1 family. In terms of assembly, component of the 30S ribosomal translation pre-initiation complex which assembles on the 30S ribosome in the order IF-2 and IF-3, IF-1 and N-formylmethionyl-tRNA(fMet); mRNA recruitment can occur at any time during PIC assembly.

It localises to the cytoplasm. One of the essential components for the initiation of protein synthesis. Stabilizes the binding of IF-2 and IF-3 on the 30S subunit to which N-formylmethionyl-tRNA(fMet) subsequently binds. Helps modulate mRNA selection, yielding the 30S pre-initiation complex (PIC). Upon addition of the 50S ribosomal subunit IF-1, IF-2 and IF-3 are released leaving the mature 70S translation initiation complex. The chain is Translation initiation factor IF-1 2 from Burkholderia ambifaria (strain ATCC BAA-244 / DSM 16087 / CCUG 44356 / LMG 19182 / AMMD) (Burkholderia cepacia (strain AMMD)).